A 330-amino-acid polypeptide reads, in one-letter code: Diacylglycerol acyltransferase/mycolyltransferase Ag85B (330 aa).

Residues 1–40 (MTDLSEKVRAWGRRLVVGAAAAATLPGLIGIAGGAATANA) form the signal peptide. 82-83 (LR) lines the substrate pocket. Residues 98-108 (FEWYYQSGLSV) form a fibronectin-binding region. Cys127 and Cys132 are oxidised to a cystine. Ser166 and Asp194 together coordinate substrate. The Nucleophile role is filled by Ser166. The active site involves Glu270. Residues 272-275 (FVRS), Lys279, and 302-304 (HSW) contribute to the substrate site. His302 is an active-site residue.

It belongs to the mycobacterial A85 antigen family.

It is found in the secreted. It catalyses the reaction 2 alpha,alpha'-trehalose 6-mycolate = alpha,alpha'-trehalose 6,6'-bismycolate + alpha,alpha-trehalose. It carries out the reaction an acyl-CoA + a 1,2-diacyl-sn-glycerol = a triacyl-sn-glycerol + CoA. The antigen 85 proteins (FbpA, FbpB, FbpC) are responsible for the high affinity of mycobacteria for fibronectin, a large adhesive glycoprotein, which facilitates the attachment of M.tuberculosis to murine alveolar macrophages (AMs). They also help to maintain the integrity of the cell wall by catalyzing the transfer of mycolic acids to cell wall arabinogalactan and through the synthesis of alpha,alpha-trehalose dimycolate (TDM, cord factor). They catalyze the transfer of a mycoloyl residue from one molecule of alpha,alpha-trehalose monomycolate (TMM) to another TMM, leading to the formation of TDM. In Mycobacterium intracellulare (strain ATCC 13950 / DSM 43223 / JCM 6384 / NCTC 13025 / 3600), this protein is Diacylglycerol acyltransferase/mycolyltransferase Ag85B (fbpB).